The following is a 417-amino-acid chain: Blood group Rh(CE) polypeptide (417 aa).

The next 11 membrane-spanning stretches (helical) occupy residues 12–32 (CLPL…YFFT), 44–64 (LVAS…GLGF), 77–97 (VAFN…LDGF), 125–145 (ISAG…MVLV), 172–192 (FYVF…KPLP), 203–223 (TIPS…WPSV), 238–258 (MFNT…GSSL), 265–285 (ISMT…GTSC), 287–307 (LIPS…ISIG), 331–351 (IFSL…VLHT), and 358–378 (MIGF…VIAL).

This sequence belongs to the ammonium transporter (TC 2.A.49) family. Rh subfamily. As to quaternary structure, heterotrimer; a RHCE monomer interacts with a RHAG homodimer. Component of the ankyrin-1 complex in the erythrocyte, composed of ANK1, RHCE, RHAG, SLC4A1, EPB42, GYPA, GYPB and AQP1. Interacts (via the N- and C-terminal) with ANK1 (via ANk 1-5 repeats); mediates the primary membrane attachment site for ANK1. In terms of tissue distribution, restricted to tissues or cell lines expressing erythroid characters. Isoform 4g and isoform RhPI-Alpha are expressed in immature erythroblasts but not in mature erythroblasts.

Its subcellular location is the membrane. Component of the ankyrin-1 complex, a multiprotein complex involved in the stability and shape of the erythrocyte membrane. Mediates the primary membrane attachment site for ANK1 when associated with RHAG. May participate in the ammonium and carbon dioxide transport through the heterotrimer form. In Homo sapiens (Human), this protein is Blood group Rh(CE) polypeptide.